The chain runs to 364 residues: DNA replication and repair protein RecF (364 aa).

Residue 30-37 participates in ATP binding; that stretch reads GENAQGKT.

It belongs to the RecF family.

It localises to the cytoplasm. The RecF protein is involved in DNA metabolism; it is required for DNA replication and normal SOS inducibility. RecF binds preferentially to single-stranded, linear DNA. It also seems to bind ATP. The polypeptide is DNA replication and repair protein RecF (Streptococcus suis (strain 98HAH33)).